Consider the following 173-residue polypeptide: NADH-ubiquinone oxidoreductase chain 6 (173 aa).

Transmembrane regions (helical) follow at residues 1 to 21 (MAYIMLTLLIGMVLGVISVAS), 25 to 45 (PYFAALGLVLVAGVGCVVLMG), 53 to 73 (LVLFLIYLGGMLVVFAYCAAL), 87 to 107 (VLGSVLGYLLLVVGAGSWFWG), and 139 to 159 (LGGGLLVVSAWVLLLTLLVVL).

It belongs to the complex I subunit 6 family.

It localises to the mitochondrion membrane. The catalysed reaction is a ubiquinone + NADH + 5 H(+)(in) = a ubiquinol + NAD(+) + 4 H(+)(out). Its function is as follows. Core subunit of the mitochondrial membrane respiratory chain NADH dehydrogenase (Complex I) that is believed to belong to the minimal assembly required for catalysis. Complex I functions in the transfer of electrons from NADH to the respiratory chain. The immediate electron acceptor for the enzyme is believed to be ubiquinone. The sequence is that of NADH-ubiquinone oxidoreductase chain 6 (MT-ND6) from Gadus morhua (Atlantic cod).